The sequence spans 345 residues: N-acetyl-gamma-glutamyl-phosphate reductase (345 aa).

The active site involves Cys-149.

Belongs to the NAGSA dehydrogenase family. Type 1 subfamily.

The protein localises to the cytoplasm. It catalyses the reaction N-acetyl-L-glutamate 5-semialdehyde + phosphate + NADP(+) = N-acetyl-L-glutamyl 5-phosphate + NADPH + H(+). It participates in amino-acid biosynthesis; L-arginine biosynthesis; N(2)-acetyl-L-ornithine from L-glutamate: step 3/4. In terms of biological role, catalyzes the NADPH-dependent reduction of N-acetyl-5-glutamyl phosphate to yield N-acetyl-L-glutamate 5-semialdehyde. The polypeptide is N-acetyl-gamma-glutamyl-phosphate reductase (Bacillus anthracis).